The primary structure comprises 316 residues: Ribosomal RNA small subunit methyltransferase H (316 aa).

S-adenosyl-L-methionine-binding positions include 35-37, aspartate 55, phenylalanine 84, aspartate 105, and glutamine 112; that span reads SGH.

It belongs to the methyltransferase superfamily. RsmH family.

The protein localises to the cytoplasm. The catalysed reaction is cytidine(1402) in 16S rRNA + S-adenosyl-L-methionine = N(4)-methylcytidine(1402) in 16S rRNA + S-adenosyl-L-homocysteine + H(+). Functionally, specifically methylates the N4 position of cytidine in position 1402 (C1402) of 16S rRNA. The polypeptide is Ribosomal RNA small subunit methyltransferase H (Streptococcus pyogenes serotype M4 (strain MGAS10750)).